We begin with the raw amino-acid sequence, 633 residues long: MNGETPDASHPQQSRAELTLAALGVVYGDIGTSPLYAVKETFNPAHGIPLVTENILGGISAILWALMVVVSLKYVILIMRANNRGEGGIMALLALALSSVKKVGRSPTPILLVGLFGAALFYGDAVLTPAMSVLSALEGIEVGTTALQPYVLPASVGVLIALFLFQRHGTAAIGALFGPVTIVWFLALAAAGIHGIARYPAILGALSPLHALGFVTQHGFASFAVLGAVLLAFTGAEALYADMGHFGSAPIRLAWFGLVFPALALNYLGQGALIIVNAKAIENPFYLLYPSWALYPMVALATAATVIASQATISGAYSLTKQGIQLGYLPRMNVVHTSERAIGQIYIPTLNGMLLVAVLVAVLGFGSSSNLASAYGVAVTGTMLVTTLLTFFVIHYGWRYNLLLSLVATGFFIAVDMAFVSSSLLKVAEGGWFPLVVGAGIFVVMLTWVRGRQALLERLQSTDVPLKSFLDSLFLAPPPRVPGTAVFLTPTPDVVPHALMHNLNHNRVLHERVVFLTVKMKDVPSVPATECAAVEPLGHACYRITLRFGFMNRPDVAQALGALPPAAGLEFDIMDTSFFLSREAIVAAAGGPSGMASWRERLFATMSRNAGNAADYFNIPANRVIEIGTQIKI.

11 consecutive transmembrane segments (helical) span residues 59–79 (ISAI…ILIM), 110–130 (ILLV…LTPA), 145–165 (TALQ…LFLF), 173–193 (IGAL…AAGI), 219–239 (GFAS…AEAL), 256–276 (FGLV…LIIV), 287–307 (LLYP…ATVI), 345–365 (IYIP…VLGF), 374–394 (AYGV…FFVI), 402–422 (LLLS…FVSS), and 429–449 (EGGW…LTWV).

This sequence belongs to the HAK/KUP transporter (TC 2.A.72) family.

It is found in the cell inner membrane. It carries out the reaction K(+)(in) + H(+)(in) = K(+)(out) + H(+)(out). Transport of potassium into the cell. Likely operates as a K(+):H(+) symporter. The protein is Probable potassium transport system protein Kup 2 of Cupriavidus necator (strain ATCC 17699 / DSM 428 / KCTC 22496 / NCIMB 10442 / H16 / Stanier 337) (Ralstonia eutropha).